Consider the following 341-residue polypeptide: Putative amino-acid ABC transporter-binding protein YhdW (341 aa).

An N-terminal signal peptide occupies residues 1 to 19 (MKKMMIATLAAASVLLAVA).

This sequence belongs to the bacterial solute-binding protein 3 family.

Its subcellular location is the periplasm. In terms of biological role, probably part of the binding-protein-dependent transport system YdhWXYZ for an amino acid. This chain is Putative amino-acid ABC transporter-binding protein YhdW (yhdW), found in Escherichia coli O157:H7.